The sequence spans 20 residues: Blooming-related protein 2 (20 aa).

The disordered stretch occupies residues Val-1 to Asp-20.

Its function is as follows. Possible 'checkpoint' protein for cell division in the blooming process. In Prorocentrum triestinum (Red tide alga), this protein is Blooming-related protein 2.